The sequence spans 378 residues: DNA replication and repair protein RecF (378 aa).

30–37 (GRNGQGKT) serves as a coordination point for ATP.

It belongs to the RecF family.

The protein localises to the cytoplasm. The RecF protein is involved in DNA metabolism; it is required for DNA replication and normal SOS inducibility. RecF binds preferentially to single-stranded, linear DNA. It also seems to bind ATP. This chain is DNA replication and repair protein RecF, found in Frankia alni (strain DSM 45986 / CECT 9034 / ACN14a).